The primary structure comprises 227 residues: ATP synthase F(0) complex subunit a (227 aa).

6 helical membrane passes run 12–32, 69–89, 98–118, 139–159, 170–190, and 196–216; these read PYLM…LLFP, WALL…MGLL, QLSM…LIGL, IPIL…ALGV, LLIQ…PSIS, and ILLL…YVFV.

It belongs to the ATPase A chain family. In terms of assembly, component of the ATP synthase complex composed at least of ATP5F1A/subunit alpha, ATP5F1B/subunit beta, ATP5MC1/subunit c (homooctomer), MT-ATP6/subunit a, MT-ATP8/subunit 8, ATP5ME/subunit e, ATP5MF/subunit f, ATP5MG/subunit g, ATP5MK/subunit k, ATP5MJ/subunit j, ATP5F1C/subunit gamma, ATP5F1D/subunit delta, ATP5F1E/subunit epsilon, ATP5PF/subunit F6, ATP5PB/subunit b, ATP5PD/subunit d, ATP5PO/subunit OSCP. ATP synthase complex consists of a soluble F(1) head domain (subunits alpha(3) and beta(3)) - the catalytic core - and a membrane F(0) domain - the membrane proton channel (subunits c, a, 8, e, f, g, k and j). These two domains are linked by a central stalk (subunits gamma, delta, and epsilon) rotating inside the F1 region and a stationary peripheral stalk (subunits F6, b, d, and OSCP). Interacts with DNAJC30; interaction is direct.

It is found in the mitochondrion inner membrane. The catalysed reaction is H(+)(in) = H(+)(out). In terms of biological role, subunit a, of the mitochondrial membrane ATP synthase complex (F(1)F(0) ATP synthase or Complex V) that produces ATP from ADP in the presence of a proton gradient across the membrane which is generated by electron transport complexes of the respiratory chain. ATP synthase complex consist of a soluble F(1) head domain - the catalytic core - and a membrane F(1) domain - the membrane proton channel. These two domains are linked by a central stalk rotating inside the F(1) region and a stationary peripheral stalk. During catalysis, ATP synthesis in the catalytic domain of F(1) is coupled via a rotary mechanism of the central stalk subunits to proton translocation. With the subunit c (ATP5MC1), forms the proton-conducting channel in the F(0) domain, that contains two crucial half-channels (inlet and outlet) that facilitate proton movement from the mitochondrial intermembrane space (IMS) into the matrix. Protons are taken up via the inlet half-channel and released through the outlet half-channel, following a Grotthuss mechanism. The polypeptide is ATP synthase F(0) complex subunit a (Coturnix japonica (Japanese quail)).